The sequence spans 491 residues: Trigger factor (491 aa).

The PPIase FKBP-type domain maps to 173-260 (GDVAVVSFSG…LDELKGRELP (88 aa)). The tract at residues 435–491 (MVDPASEDKPAKASKAKSSKAKAEKEPAAEGQAKAKPAAKTSKSKTKAAEKLITPID) is disordered. Over residues 463–475 (AEGQAKAKPAAKT) the composition is skewed to low complexity.

The protein belongs to the FKBP-type PPIase family. Tig subfamily.

It is found in the cytoplasm. The enzyme catalyses [protein]-peptidylproline (omega=180) = [protein]-peptidylproline (omega=0). In terms of biological role, involved in protein export. Acts as a chaperone by maintaining the newly synthesized protein in an open conformation. Functions as a peptidyl-prolyl cis-trans isomerase. The sequence is that of Trigger factor from Synechococcus sp. (strain RCC307).